The chain runs to 381 residues: V-type proton ATPase subunit C 1-B (381 aa).

T2 is modified (N-acetylthreonine).

Belongs to the V-ATPase C subunit family. V-ATPase is a heteromultimeric enzyme made up of two complexes: the ATP-hydrolytic V1 complex and the proton translocation V0 complex. The V1 complex consists of three catalytic AB heterodimers that form a heterohexamer, three peripheral stalks each consisting of EG heterodimers, one central rotor including subunits D and F, and the regulatory subunits C and H. The proton translocation complex V0 consists of the proton transport subunit a, a ring of proteolipid subunits c9c'', rotary subunit d, subunits e and f, and two accessory subunits.

Subunit of the V1 complex of vacuolar(H+)-ATPase (V-ATPase), a multisubunit enzyme composed of a peripheral complex (V1) that hydrolyzes ATP and a membrane integral complex (V0) that translocates protons. V-ATPase is responsible for acidifying and maintaining the pH of intracellular compartments and in some cell types, is targeted to the plasma membrane, where it is responsible for acidifying the extracellular environment. Subunit C is necessary for the assembly of the catalytic sector of the enzyme and is likely to have a specific function in its catalytic activity. The chain is V-type proton ATPase subunit C 1-B (atp6v1c1b) from Danio rerio (Zebrafish).